Here is a 305-residue protein sequence, read N- to C-terminus: Protoheme IX farnesyltransferase 1 (305 aa).

8 helical membrane-spanning segments follow: residues 22 to 42 (IKTG…TLAL), 53 to 73 (IPEI…AGAF), 94 to 114 (VTGD…TIFG), 115 to 135 (LVFL…GLFL), 154 to 174 (IGSV…YPDV), 179 to 199 (IIGL…AIAI), 230 to 250 (LVIL…LMLV), and 283 to 303 (LFHM…GIFF).

It belongs to the UbiA prenyltransferase family. Protoheme IX farnesyltransferase subfamily. In terms of assembly, interacts with CtaA.

It localises to the cell membrane. The enzyme catalyses heme b + (2E,6E)-farnesyl diphosphate + H2O = Fe(II)-heme o + diphosphate. The protein operates within porphyrin-containing compound metabolism; heme O biosynthesis; heme O from protoheme: step 1/1. Converts heme B (protoheme IX) to heme O by substitution of the vinyl group on carbon 2 of heme B porphyrin ring with a hydroxyethyl farnesyl side group. The chain is Protoheme IX farnesyltransferase 1 from Bacillus cytotoxicus (strain DSM 22905 / CIP 110041 / 391-98 / NVH 391-98).